A 458-amino-acid polypeptide reads, in one-letter code: BPI fold-containing family B member 2 (458 aa).

The N-terminal stretch at 1-20 (MAWASRLGLLLALLLPVVGA) is a signal peptide. The residue at position 52 (Thr-52) is a Phosphothreonine; by FAM20C. Ser-60 is modified (phosphoserine; by FAM20C). N-linked (GlcNAc...) asparagine glycosylation is found at Asn-96, Asn-151, Asn-293, and Asn-332. Cysteines 137 and 174 form a disulfide.

Belongs to the BPI/LBP/Plunc superfamily. BPI/LBP family. In terms of tissue distribution, highly expressed in tonsils, especially in hypertrophic tonsils. Detected at very low levels in fetal liver.

The protein resides in the secreted. This is BPI fold-containing family B member 2 (BPIFB2) from Homo sapiens (Human).